Reading from the N-terminus, the 868-residue chain is Lysosomal cholesterol signaling protein (868 aa).

The Lumenal segment spans residues 1 to 36 (MDSYFSAKNSTLAGDMNATWPASHGFNATGDPPSMS). Residues 1–368 (MDSYFSAKNS…SAWLLTFPTM (368 aa)) form a PIN-like transporter region. 3 N-linked (GlcNAc...) asparagine glycosylation sites follow: asparagine 9, asparagine 17, and asparagine 27. Residues 37 to 57 (ITRLFPALLECFGIVLCGYIA) form a helical membrane-spanning segment. Residues phenylalanine 41 and tyrosine 55 each coordinate cholesterol. The Cytoplasmic segment spans residues 58 to 77 (GRANIITSTQAKGLGNFVSR). The helical transmembrane segment at 78-98 (FALPALLFKNMVVLNFSNVDW) threads the bilayer. Residues 99–102 (AFLY) are Lumenal-facing. The chain crosses the membrane as a helical span at residues 103–123 (SVLIGKASVFFIVCVLTLLVA). Residues 124–131 (SPESRFSK) are Cytoplasmic-facing. A discontinuously helical transmembrane segment spans residues 132 to 152 (AGLFPIFATQSNDFALGYPIV). At 153-165 (EALYQSTYPEYLQ) the chain is on the lumenal side. The helical transmembrane segment at 166–186 (YIYLVAPISLMMLNPIGFIFC) threads the bilayer. The Cytoplasmic segment spans residues 187 to 211 (EIQKSKDTQNASQNKAKIVGLGFLR). Residues 212-232 (VLQNPIVFMVFVGIAFNFILD) traverse the membrane as a discontinuously helical segment. The Lumenal segment spans residues 233 to 241 (KKIPVYMEN). Residues 242–262 (FLDGLANSFSGSALFYLGLTM) form a discontinuously helical membrane-spanning segment. Residues 263–271 (VGKIRRLKK) lie on the Cytoplasmic side of the membrane. Cholesterol-binding residues include glycine 264, lysine 265, and isoleucine 266. The chain crosses the membrane as a helical span at residues 272–292 (SAFVVLTLLITAKLLVLPLLC). At 293 to 313 (REMVELLDKGDSVVNHTSLSN) the chain is on the lumenal side. Asparagine 307 is a glycosylation site (N-linked (GlcNAc...) asparagine). The discontinuously helical transmembrane segment at 314 to 334 (YAFLYGVFPVAPGVAIFATQF) threads the bilayer. Topologically, residues 335-344 (NMEVEIITSG) are cytoplasmic. The chain crosses the membrane as a helical span at residues 345–365 (MVISTFVSAPIMYVSAWLLTF). The Lumenal segment spans residues 366–379 (PTMDAKPLAYAIQN). Residues 378 to 715 (QNVSFDISII…FGIFGLDKHL (338 aa)) are GPCR. Asparagine 379 carries an N-linked (GlcNAc...) asparagine glycan. Residues 380-400 (VSFDISIISLVSLIWSLSILL) form a helical membrane-spanning segment. Residues 401 to 412 (LSKKYKQLPHML) are Cytoplasmic-facing. The helical transmembrane segment at 413–433 (TANLLIAQTIVCAGMMIWNFV) threads the bilayer. Over 434–436 (KEK) the chain is Lumenal. A helical transmembrane segment spans residues 437–457 (NFVGQILVFVLLYSSLYSTYL). Residues 458-478 (WTGLLAVSLFLLKKRESVQLP) are Cytoplasmic-facing. The chain crosses the membrane as a helical span at residues 479-499 (VGIIIISGWGIPALLVGVLLI). The Lumenal segment spans residues 500 to 518 (TGKHNGDSIDSAFFYGKEQ). A helical transmembrane segment spans residues 519-539 (MITTAVTLFCSILIAGVSLMC). Over 540–658 (MNRTTQAGHY…GDPQLTRHVL (119 aa)) the chain is Cytoplasmic. The interval 550–582 (EGFGQSQNHKPVEPGSTAFEENPAPTNEPELFP) is disordered. Arginine 655 is a cholesterol binding site. The chain crosses the membrane as a helical span at residues 659 to 679 (LCLLLIIGLFANLSSCLWWLF). Residues 680–689 (NHETGRLYVE) lie on the Lumenal side of the membrane. A helical membrane pass occupies residues 690–710 (LQFFCAVFNFGQGFISFGIFG). Residues 711-868 (LDKHLIILPF…SSPPSVSPKT (158 aa)) are Cytoplasmic-facing. The DEP domain occupies 755 to 833 (YHRDLCIRNI…DEYLFYRFLQ (79 aa)). The segment at 836–868 (PEQSPPARTLRDHQEESYKEIGHSSPPSVSPKT) is disordered. Residues 844-857 (TLRDHQEESYKEIG) are compositionally biased toward basic and acidic residues.

In terms of assembly, homodimer; via the transporter region and DEP domain. Interacts with the GATOR1 complex; preventing interaction between GATOR1 and KICSTOR; interaction is disrupted upon cholesterol starvation. In terms of tissue distribution, widely expressed in adult tissues and during development. In brain, widely distributed in forebrain regions, while it shows a more restricted distribution in the midbrain and hindbrain regions. Expressed at highest level in the lateral part of striatum and hippocampus.

It localises to the lysosome membrane. Its function is as follows. Cholesterol-binding protein that acts as a regulator of mTORC1 signaling pathway. Acts as a sensor of cholesterol to signal cholesterol sufficiency to mTORC1: in presence of cholesterol, binds cholesterol, leading to disruption of the interaction between the GATOR1 and KICSTOR complexes and promotion of mTORC1 signaling. Upon cholesterol starvation, GPR155/LYCHOS is unable to perturb the association between GATOR1 and KICSTOR, leading to mTORC1 signaling inhibition. Binds indole-3-acetic acid and may play a role in tryptophan metabolism. The chain is Lysosomal cholesterol signaling protein from Mus musculus (Mouse).